A 436-amino-acid chain; its full sequence is GTPase Der (436 aa).

EngA-type G domains lie at 4–167 (PTVA…PTEV) and 175–351 (IRFS…ESQN). GTP contacts are provided by residues 10-17 (GRPNVGKS), 57-61 (DTGGI), 119-122 (NKVD), 181-188 (GRPNVGKS), 229-233 (DTAGM), and 294-297 (NKWD). A KH-like domain is found at 352 to 436 (RRISSAVLND…PIHLIARKRK (85 aa)).

It belongs to the TRAFAC class TrmE-Era-EngA-EngB-Septin-like GTPase superfamily. EngA (Der) GTPase family. In terms of assembly, associates with the 50S ribosomal subunit.

In terms of biological role, GTPase that plays an essential role in the late steps of ribosome biogenesis. The sequence is that of GTPase Der from Streptococcus thermophilus (strain ATCC BAA-491 / LMD-9).